The following is a 320-amino-acid chain: MSDNLWALARAFIITVVFMPFLIKFLKQSKEQAVIRKLGPDHQSKAGTPSMGGLLFVLAAAISAFIGGAAYHGMSGVVAMIIPVFALVAYAIIGGIDDALKLINHADDGFAFKPKLLAQTLSAVVIMLIMWLLGVPFTLYIPMIGTINLGLFYFVFLWFWLVGWSNATNLTDGLDGLLAGNSVVVYAAYTVIAMHMHNHIIVLFNFSIIGGLLGFLIFNRPKAKIFMGDTGSLALGAGLAIESILLGVPFSLIWFGLIFVIETLSVIIQTVGYHFWHKRIFPMAPIHHSFEKFGWSEWQIDLLFWIVSSILAVAGIFYMN.

Transmembrane regions (helical) follow at residues 5-25, 51-71, 76-96, 124-144, 145-165, 176-196, 198-218, 233-255, and 298-318; these read LWALARAFIITVVFMPFLIKF, MGGLLFVLAAAISAFIGGAAY, GVVAMIIPVFALVAYAIIGGI, VVIMLIMWLLGVPFTLYIPMI, GTINLGLFYFVFLWFWLVGWS, GLLAGNSVVVYAAYTVIAMHM, NHIIVLFNFSIIGGLLGFLIF, LALGAGLAIESILLGVPFSLIWF, and WQIDLLFWIVSSILAVAGIFY.

This sequence belongs to the glycosyltransferase 4 family. MraY subfamily. It depends on Mg(2+) as a cofactor.

It is found in the cell membrane. It catalyses the reaction UDP-N-acetyl-alpha-D-muramoyl-L-alanyl-gamma-D-glutamyl-L-lysyl-D-alanyl-D-alanine + di-trans,octa-cis-undecaprenyl phosphate = Mur2Ac(oyl-L-Ala-gamma-D-Glu-L-Lys-D-Ala-D-Ala)-di-trans,octa-cis-undecaprenyl diphosphate + UMP. It participates in cell wall biogenesis; peptidoglycan biosynthesis. In terms of biological role, catalyzes the initial step of the lipid cycle reactions in the biosynthesis of the cell wall peptidoglycan: transfers peptidoglycan precursor phospho-MurNAc-pentapeptide from UDP-MurNAc-pentapeptide onto the lipid carrier undecaprenyl phosphate, yielding undecaprenyl-pyrophosphoryl-MurNAc-pentapeptide, known as lipid I. The protein is Phospho-N-acetylmuramoyl-pentapeptide-transferase of Leuconostoc citreum (strain KM20).